A 389-amino-acid chain; its full sequence is Acyl-[acyl-carrier-protein] dehydrogenase MbtN (389 aa).

Belongs to the acyl-CoA dehydrogenase family. The cofactor is FAD.

Its pathway is siderophore biosynthesis; mycobactin biosynthesis. In terms of biological role, catalyzes the dehydrogenation at the alpha-beta position of ACP-bound acyl chains. This results in the introduction of a double bond in the lipidic chain, which is further transferred to the epsilon-amino group of lysine residue in the mycobactin core by MbtK. The chain is Acyl-[acyl-carrier-protein] dehydrogenase MbtN (mbtN) from Mycobacterium sp. (strain MCS).